The chain runs to 224 residues: Large ribosomal subunit protein uL1 (224 aa).

This sequence belongs to the universal ribosomal protein uL1 family. As to quaternary structure, part of the 50S ribosomal subunit.

Binds directly to 23S rRNA. The L1 stalk is quite mobile in the ribosome, and is involved in E site tRNA release. Functionally, protein L1 is also a translational repressor protein, it controls the translation of the L11 operon by binding to its mRNA. The protein is Large ribosomal subunit protein uL1 of Borrelia recurrentis (strain A1).